Here is a 213-residue protein sequence, read N- to C-terminus: MVPEEEPQDREKGLWWFQLKVWSMAVVSILLLSVCFTVSSVVPHNFMYSKTVKRLSKLREYQQYHPSLTCVMEGKDIEDWSCCPTPWTSFQSSCYFISTGMQSWTKSQKNCSVMGADLVVINTREEQDFIIQNLKRNSSYFLGLSDPGGRRHWQWVDQTPYNENVTFWHSGEPNNLDERCAIINFRSSEEWGWNDIHCHVPQKSICKMKKIYI.

Over Met1–Val21 the chain is Cytoplasmic. Residues Trp22–His44 form a helical; Signal-anchor for type II membrane protein membrane-spanning segment. Topologically, residues Asn45–Ile213 are extracellular. Cystine bridges form between Cys70/Cys82 and Cys83/Cys94. The C-type lectin domain maps to Phe90 to Lys207. Asn110 and Asn137 each carry an N-linked (GlcNAc...) asparagine glycan. Cystine bridges form between Cys111–Cys206 and Cys180–Cys198. Residue Ser139 participates in a carbohydrate binding. N-linked (GlcNAc...) asparagine glycosylation occurs at Asn164. 3 residues coordinate Ca(2+): Glu172, Asn174, and Glu178. A carbohydrate is bound by residues Glu178, Asn184 to Arg186, Asn194, Asn194 to Asp195, and Gln202. Residues Asn194 and Asp195 each coordinate Ca(2+).

In terms of assembly, homodimer. Expressed in plasmacytoid dendritic cells (PDCs). Constitutively expressed in immature monocyte-derived dendritic cells (iMDDC) and is significantly down-regulated upon maturation with LPS but not with TNF-alpha.

The protein resides in the cell membrane. Lectin-type cell surface receptor which may play a role in antigen capturing by dendritic cells. Specifically recognizes non-sialylated galactose-terminated biantennary glycans containing the trisaccharide epitope Gal(beta1-3/4)GlcNAc(beta1-2)Man. Binds to serum IgG. Efficiently targets ligand into antigen-processing and peptide-loading compartments for presentation to T-cells. May mediate potent inhibition of induction of IFN-alpha/beta expression in plasmacytoid dendritic cells. May act as a signaling receptor that activates protein-tyrosine kinases and mobilizes intracellular calcium. The polypeptide is C-type lectin domain family 4 member C (CLEC4C) (Homo sapiens (Human)).